Consider the following 337-residue polypeptide: MNTEATHDQNEALTTGARLRNAREQLGLSQQAVAERLCLKVSTVRDIEEDKAPADLASTFLRGYIRSYARLVHIPEEELLPGLEKQAPLRAAKVAPMQSFSLGKRRKKRDGWLMTFTWLVLFVVIGLSGAWWWQDHKAQQEEITTMADQSSAELSSNSEQGQSVPLNTSTTTDPATTSTPPASVDTTATNTQTPAVTAPAPAVDPQQNAVVSPSQANVDTAATPAPTAATTPDGAAPLPTDQAGVTTPVADPNALVMNFTADCWLEVTDATGKRLFSGMQRKDGNLNLTGQAPYKLKIGAPAAVQIQYQGKPVDLSRFIRTNQVARLTLNAEQSPAQ.

Over 1–111 (MNTEATHDQN…LGKRRKKRDG (111 aa)) the chain is Cytoplasmic. The 53-residue stretch at 19 to 71 (LRNAREQLGLSQQAVAERLCLKVSTVRDIEEDKAPADLASTFLRGYIRSYARL) folds into the HTH cro/C1-type domain. The segment at residues 30–49 (QQAVAERLCLKVSTVRDIEE) is a DNA-binding region (H-T-H motif). Residues 112–132 (WLMTFTWLVLFVVIGLSGAWW) form a helical; Signal-anchor for type II membrane protein membrane-spanning segment. Over 133–337 (WQDHKAQQEE…TLNAEQSPAQ (205 aa)) the chain is Periplasmic. The segment covering 145–167 (TMADQSSAELSSNSEQGQSVPLN) has biased composition (polar residues). A disordered region spans residues 145–236 (TMADQSSAEL…TAATTPDGAA (92 aa)). Residues 168-207 (TSTTTDPATTSTPPASVDTTATNTQTPAVTAPAPAVDPQQ) show a composition bias toward low complexity. Positions 208-218 (NAVVSPSQANV) are enriched in polar residues. Low complexity predominate over residues 219–236 (DTAATPAPTAATTPDGAA).

This sequence belongs to the RodZ family.

It localises to the cell inner membrane. Functionally, cytoskeletal protein that is involved in cell-shape control through regulation of the length of the long axis. The protein is Cytoskeleton protein RodZ of Escherichia coli O139:H28 (strain E24377A / ETEC).